A 473-amino-acid polypeptide reads, in one-letter code: Phosphatidylserine synthase 1 (473 aa).

Residues 1–35 lie on the Cytoplasmic side of the membrane; the sequence is MAACVGSRTLSKDDVNYRLHFRMINEQQVEDITLE. The helical transmembrane segment at 36-56 threads the bilayer; sequence FFYRPHTITLLSFTILSLMAF. At 57–72 the chain is on the lumenal side; it reads AFTRDDSVPEENIWRG. The chain crosses the membrane as a helical span at residues 73–93; sequence ILSVIFFFLIISVLAFPNGPF. Residues 94 to 102 lie on the Cytoplasmic side of the membrane; sequence TRPHPAIWR. The chain crosses the membrane as a helical span at residues 103–123; that stretch reads MVFGLSVLYFLFLVFVLFLNF. Residues 124-186 lie on the Lumenal side of the membrane; the sequence is EQVKAVMYWL…AMKALLIRSY (63 aa). The helical transmembrane segment at 187 to 207 threads the bilayer; sequence GLCWTISITWELTELFFMHLL. The Cytoplasmic segment spans residues 208 to 216; that stretch reads PNFAECWWD. Residues 217 to 237 traverse the membrane as a helical segment; it reads QVILDILLCNGGGIWLGMVVC. At 238 to 286 the chain is on the lumenal side; the sequence is RFLEMRTYHWASFKDIHTTTGKIKRAVLQFTPASWTYVRWFDPKSSFQR. A helical membrane pass occupies residues 287–307; it reads VAGIYLFMIIWQLTELNTFFL. Residues 308 to 319 lie on the Cytoplasmic side of the membrane; sequence KHIFVFQASHPL. The chain crosses the membrane as a helical span at residues 320–342; that stretch reads SWGRILFIGIITAPTVRQYYAYL. Residues 343–355 are Lumenal-facing; that stretch reads TDTQCKRVGTQCW. Residues 356-376 traverse the membrane as a helical segment; it reads VFGVIAFLEAIVCIKFGQDLF. The Cytoplasmic portion of the chain corresponds to 377–380; that stretch reads SKTQ. The helical transmembrane segment at 381–401 threads the bilayer; it reads ILYVVFWLLCVAFTTFLCLYG. The Lumenal segment spans residues 402–473; it reads MVWYAEYYGH…SKVTNGIGKK (72 aa). The disordered stretch occupies residues 420–473; the sequence is EDSPYSPDASWLHSKFSKGADNSPPKHPVNSESHSSRRRNRHSRSKVTNGIGKK. The segment covering 455–464 has biased composition (basic residues); it reads SRRRNRHSRS.

This sequence belongs to the phosphatidyl serine synthase family.

It is found in the endoplasmic reticulum membrane. The catalysed reaction is a 1,2-diacyl-sn-glycero-3-phosphoethanolamine + L-serine = a 1,2-diacyl-sn-glycero-3-phospho-L-serine + ethanolamine. It carries out the reaction a 1,2-diacyl-sn-glycero-3-phosphocholine + L-serine = a 1,2-diacyl-sn-glycero-3-phospho-L-serine + choline. It participates in phospholipid metabolism; phosphatidylserine biosynthesis. Functionally, catalyzes a base-exchange reaction in which the polar head group of phosphatidylethanolamine (PE) or phosphatidylcholine (PC) is replaced by L-serine. Catalyzes mainly the conversion of phosphatidylcholine but also converts, in vitro and to a lesser extent, phosphatidylethanolamine. This chain is Phosphatidylserine synthase 1 (PTDSS1), found in Gallus gallus (Chicken).